The following is a 361-amino-acid chain: MLYLLSDLSSSFTPLNVFRYITFRTGGALFTAGLFVFWFGPWIISLLRIRQGKGQPIREDGPQTHLLTKRGTPTMGGLMILAGAVVAILLWANPRNHYVWVTLTVTLGFGAIGFYDDYLKVTKQSHKGFSGKFRLALEAVIAMAACVTIAVYSPAALQNQLAFPVFKDALLNLGWFYPLFGAFVIVGAGNSVNMTDGLDGLAIVPVMIACGTFGFIAYLVGNSFTASYLQVNYVRDTGELAVVCGAVIGAGLGFLWFNAPPAQIFMGDTGSLALGGLLGSIAVATKHEIVLAIVGGLFVLEMMSVIIQVASFKLTGKRVFRMAPIHHHFEQKGWKEPQVVIRFWIIAVILAMAGLATLKLR.

10 helical membrane passes run Gly-27 to Leu-47, Thr-72 to Ala-92, Val-99 to Leu-119, Leu-135 to Ala-155, Ala-169 to Gly-189, Gly-200 to Val-220, Leu-240 to Pro-260, Ile-264 to Ala-284, Ile-289 to Val-309, and Gln-338 to Leu-358.

Belongs to the glycosyltransferase 4 family. MraY subfamily. Requires Mg(2+) as cofactor.

The protein localises to the cell inner membrane. The catalysed reaction is UDP-N-acetyl-alpha-D-muramoyl-L-alanyl-gamma-D-glutamyl-meso-2,6-diaminopimeloyl-D-alanyl-D-alanine + di-trans,octa-cis-undecaprenyl phosphate = di-trans,octa-cis-undecaprenyl diphospho-N-acetyl-alpha-D-muramoyl-L-alanyl-D-glutamyl-meso-2,6-diaminopimeloyl-D-alanyl-D-alanine + UMP. It participates in cell wall biogenesis; peptidoglycan biosynthesis. Catalyzes the initial step of the lipid cycle reactions in the biosynthesis of the cell wall peptidoglycan: transfers peptidoglycan precursor phospho-MurNAc-pentapeptide from UDP-MurNAc-pentapeptide onto the lipid carrier undecaprenyl phosphate, yielding undecaprenyl-pyrophosphoryl-MurNAc-pentapeptide, known as lipid I. This is Phospho-N-acetylmuramoyl-pentapeptide-transferase from Methylobacterium radiotolerans (strain ATCC 27329 / DSM 1819 / JCM 2831 / NBRC 15690 / NCIMB 10815 / 0-1).